A 1224-amino-acid polypeptide reads, in one-letter code: Protein MSN5 (1224 aa).

Residues 1200 to 1224 (NKENGDMLDDPNIEDGAVGNLFDDN) form a disordered region.

As to quaternary structure, interacts with CEX1.

This Saccharomyces cerevisiae (strain ATCC 204508 / S288c) (Baker's yeast) protein is Protein MSN5 (MSN5).